The primary structure comprises 474 residues: Probable CAAX prenyl protease 1 (474 aa).

The next 3 membrane-spanning stretches (helical) occupy residues 103 to 123, 196 to 216, and 230 to 250; these read SWFS…IIKY, IFVI…SVVV, and FIMY…TIAP. His332 serves as a coordination point for Zn(2+). Residue Glu333 is part of the active site. His336 contributes to the Zn(2+) binding site. Transmembrane regions (helical) follow at residues 344 to 364 and 381 to 401; these read INTI…AAFI and VIVG…ILTF. Glu411 is a binding site for Zn(2+). Asp415 functions as the Proton donor in the catalytic mechanism.

It belongs to the peptidase M48A family. Zn(2+) is required as a cofactor.

The protein resides in the endoplasmic reticulum membrane. The catalysed reaction is Hydrolyzes the peptide bond -P2-(S-farnesyl or geranylgeranyl)C-P1'-P2'-P3'-COOH where P1' and P2' are amino acids with aliphatic side chains and P3' is any C-terminal residue.. Proteolytically removes the C-terminal three residues of farnesylated proteins. This Schizosaccharomyces pombe (strain 972 / ATCC 24843) (Fission yeast) protein is Probable CAAX prenyl protease 1.